Consider the following 684-residue polypeptide: Probable metal-nicotianamine transporter YSL9 (684 aa).

A compositionally biased stretch (basic residues) spans 1–10; that stretch reads MKQERRRKRQ. The tract at residues 1–55 is disordered; sequence MKQERRRKRQPGPPRLELVVAHPREEEMAGLDGGGDAEEGATHARGGGGAPPPWR. The next 14 membrane-spanning stretches (helical) occupy residues 58–78, 82–102, 130–150, 174–194, 234–254, 295–315, 341–361, 402–422, 430–450, 462–482, 515–535, 568–588, 612–632, and 642–662; these read LTAR…VIVM, LTTG…FVVL, CAVA…LLGL, GIAW…LALV, VNGF…QWFY, LVNL…WPLI, FICV…IVAL, LAFS…PMMF, VVIA…GAGL, IALF…AGLV, IIAQ…TFFL, FSAL…FAVA, VPFL…LIVF, and AALM…LWIF.

This sequence belongs to the YSL (TC 2.A.67.2) family.

It is found in the membrane. In terms of biological role, may be involved in the transport of nicotianamine-chelated metals. The chain is Probable metal-nicotianamine transporter YSL9 (YSL9) from Oryza sativa subsp. japonica (Rice).